The following is a 365-amino-acid chain: Sulfate/thiosulfate import ATP-binding protein CysA (365 aa).

One can recognise an ABC transporter domain in the interval 3-237 (IEIANIKKSF…PATRFVLEFM (235 aa)). 35 to 42 (GPSGSGKT) is a binding site for ATP.

It belongs to the ABC transporter superfamily. Sulfate/tungstate importer (TC 3.A.1.6) family. As to quaternary structure, the complex is composed of two ATP-binding proteins (CysA), two transmembrane proteins (CysT and CysW) and a solute-binding protein (CysP).

Its subcellular location is the cell inner membrane. It carries out the reaction sulfate(out) + ATP + H2O = sulfate(in) + ADP + phosphate + H(+). The catalysed reaction is thiosulfate(out) + ATP + H2O = thiosulfate(in) + ADP + phosphate + H(+). Its function is as follows. Part of the ABC transporter complex CysAWTP involved in sulfate/thiosulfate import. Responsible for energy coupling to the transport system. This chain is Sulfate/thiosulfate import ATP-binding protein CysA, found in Shigella flexneri.